The sequence spans 306 residues: Serine/threonine-protein phosphatase PP2A-1 catalytic subunit (306 aa).

Mn(2+) is bound by residues D54, H56, D82, and N114. H115 serves as the catalytic Proton donor. Residues H164 and H238 each contribute to the Mn(2+) site. At L306 the chain carries Leucine methyl ester.

This sequence belongs to the PPP phosphatase family. PP-2A subfamily. As to quaternary structure, PP2A consists of a common heterodimeric core enzyme, composed of a 36 kDa catalytic subunit (subunit C) and a 65 kDa constant regulatory subunit (subunit A), that associates with a variety of regulatory subunits such as subunits B (the R2/B/PR55/B55, R3/B''/PR72/PR130/PR59 and R5/B'/B56 families). Interacts with TAF12B. Interacts with SRK2E/OST1. Interacts with TAP46. It depends on Mn(2+) as a cofactor. Post-translationally, reversibly methyl esterified on Leu-306 by leucine carboxyl methyltransferase 1 (LCMT1) and pectin methylesterase 1 (PME1). Carboxyl methylation influences the affinity of the catalytic subunit for the different regulatory subunits, thereby modulating the PP2A holoenzyme's substrate specificity, enzyme activity and cellular localization. In terms of processing, phosphorylation of either threonine (by autophosphorylation-activated protein kinase) or tyrosine results in inactivation of the phosphatase. Auto-dephosphorylation has been suggested as a mechanism for reactivation.

The protein localises to the cytoplasm. It carries out the reaction O-phospho-L-seryl-[protein] + H2O = L-seryl-[protein] + phosphate. The enzyme catalyses O-phospho-L-threonyl-[protein] + H2O = L-threonyl-[protein] + phosphate. This is Serine/threonine-protein phosphatase PP2A-1 catalytic subunit from Arabidopsis thaliana (Mouse-ear cress).